The sequence spans 443 residues: Methyl-coenzyme M reductase II subunit beta (443 aa).

Residue Y367 participates in coenzyme M binding. Position 369 (G369) interacts with coenzyme B.

This sequence belongs to the methyl-coenzyme M reductase beta subunit family. In terms of assembly, MCR is a hexamer of two alpha, two beta, and two gamma chains, forming a dimer of heterotrimers. Coenzyme F430 is required as a cofactor.

It carries out the reaction coenzyme B + methyl-coenzyme M = methane + coenzyme M-coenzyme B heterodisulfide. It participates in one-carbon metabolism; methyl-coenzyme M reduction; methane from methyl-coenzyme M: step 1/1. Its function is as follows. Component of the methyl-coenzyme M reductase (MCR) I that catalyzes the reductive cleavage of methyl-coenzyme M (CoM-S-CH3 or 2-(methylthio)ethanesulfonate) using coenzyme B (CoB or 7-mercaptoheptanoylthreonine phosphate) as reductant which results in the production of methane and the mixed heterodisulfide of CoB and CoM (CoM-S-S-CoB). This is the final step in methanogenesis. The chain is Methyl-coenzyme M reductase II subunit beta from Methanothermobacter marburgensis (strain ATCC BAA-927 / DSM 2133 / JCM 14651 / NBRC 100331 / OCM 82 / Marburg) (Methanobacterium thermoautotrophicum).